The sequence spans 240 residues: Eukaryotic translation initiation factor 3 subunit J (240 aa).

Positions 1-66 (MADDWESAAD…VPVKTKPSKA (66 aa)) are disordered. The span at 27 to 45 (GEDDDDDVKESWEDEEEKK) shows a compositional bias: acidic residues.

This sequence belongs to the eIF-3 subunit J family. Component of the eukaryotic translation initiation factor 3 (eIF-3) complex. The eIF-3 complex interacts with pix.

The protein localises to the cytoplasm. Its function is as follows. Component of the eukaryotic translation initiation factor 3 (eIF-3) complex, which is involved in protein synthesis of a specialized repertoire of mRNAs and, together with other initiation factors, stimulates binding of mRNA and methionyl-tRNAi to the 40S ribosome. The eIF-3 complex specifically targets and initiates translation of a subset of mRNAs involved in cell proliferation. This chain is Eukaryotic translation initiation factor 3 subunit J, found in Drosophila persimilis (Fruit fly).